The chain runs to 454 residues: MNRRRERVVVVGAGLAGSLAALYLARQGHEVDIFERRPDPRSALAGPEGRSINLGLSARGMRALDGVGLLADVLKHSVPMRDRVVHSPDGGVRAQPYGVREHEILHSVLREELISLVVSAAEAEPGVRFHFDSLLTSLDRETGTVRVAPTAGGEASTVTADLVVGADGVFSTVRQQMQHGLRANYAQDFLPWGYKELTIPVGTDGQPRVRLEALHVWPGHEALMVAHPNRDGSLTCTLFMAHEGPVSFAALDTPAAVRDFFRRRFPDAEELMPDLVREITEHPVGHLVTVRTAPWRYADRVVLIGDAAHAVYPFYGQGMNSAFEDCVVLDECLTAHPDRAAALAAYEAARKPHTDVLADLSTANFEDLRDRVHRLGYSASAAADRLLARLLPQRWVPLYAMVAHTTIPYADALARANRQDRILRRAGAGLTLAVGLAATAAALRVGRRRRAARR.

It belongs to the aromatic-ring hydroxylase family. KMO subfamily. Requires FAD as cofactor.

The catalysed reaction is L-kynurenine + NADPH + O2 + H(+) = 3-hydroxy-L-kynurenine + NADP(+) + H2O. Its pathway is cofactor biosynthesis; NAD(+) biosynthesis; quinolinate from L-kynurenine: step 1/3. In terms of biological role, catalyzes the hydroxylation of L-kynurenine (L-Kyn) to form 3-hydroxy-L-kynurenine (L-3OHKyn). Required for synthesis of quinolinic acid. The chain is Kynurenine 3-monooxygenase from Salinispora arenicola (strain CNS-205).